A 115-amino-acid polypeptide reads, in one-letter code: Ig heavy chain V-III region W3082 (115 aa).

In terms of domain architecture, Ig-like spans 1–114 (EVKLEESGGG…WGQGTLVTVS (114 aa)). A disulfide bond links Cys-22 and Cys-98.

The protein is Ig heavy chain V-III region W3082 of Mus musculus (Mouse).